We begin with the raw amino-acid sequence, 359 residues long: Membrane-bound lytic murein transglycosylase C (359 aa).

An N-terminal signal peptide occupies residues 1–16 (MKKYLALALIAPLLIS). Cys-17 carries N-palmitoyl cysteine lipidation. Cys-17 carries S-diacylglycerol cysteine lipidation.

Belongs to the transglycosylase Slt family.

The protein localises to the cell outer membrane. The enzyme catalyses Exolytic cleavage of the (1-&gt;4)-beta-glycosidic linkage between N-acetylmuramic acid (MurNAc) and N-acetylglucosamine (GlcNAc) residues in peptidoglycan, from either the reducing or the non-reducing ends of the peptidoglycan chains, with concomitant formation of a 1,6-anhydrobond in the MurNAc residue.. In terms of biological role, murein-degrading enzyme. May play a role in recycling of muropeptides during cell elongation and/or cell division. The polypeptide is Membrane-bound lytic murein transglycosylase C (Shigella dysenteriae serotype 1 (strain Sd197)).